The following is a 698-amino-acid chain: Polyribonucleotide nucleotidyltransferase (698 aa).

Mg(2+) is bound by residues Asp-490 and Asp-496. The KH domain occupies 557-616 (PKVVTMTIKPDKIRDVIGPGGKKINEIIDETGVKLDIEQDGTIFIGAVDQAMINRAREII). The S1 motif domain maps to 626-694 (GQTYQATVKR…KQGRVNASHR (69 aa)).

It belongs to the polyribonucleotide nucleotidyltransferase family. Mg(2+) serves as cofactor.

Its subcellular location is the cytoplasm. It carries out the reaction RNA(n+1) + phosphate = RNA(n) + a ribonucleoside 5'-diphosphate. Involved in mRNA degradation. Catalyzes the phosphorolysis of single-stranded polyribonucleotides processively in the 3'- to 5'-direction. The chain is Polyribonucleotide nucleotidyltransferase from Staphylococcus aureus (strain bovine RF122 / ET3-1).